The chain runs to 191 residues: Lipid A acyltransferase PagP (191 aa).

The first 23 residues, 1 to 23 (MRLFYQRISLLISLCGFFSAAWA), serve as a signal peptide directing secretion. Residues H62, D105, and S106 contribute to the active site.

It belongs to the lipid A palmitoyltransferase family. As to quaternary structure, homodimer.

Its subcellular location is the cell outer membrane. It carries out the reaction a lipid A + a 1,2-diacyl-sn-glycero-3-phosphocholine = a hepta-acyl lipid A + a 2-acyl-sn-glycero-3-phosphocholine. It catalyses the reaction a lipid IVA + a 1,2-diacyl-sn-glycero-3-phosphocholine = a lipid IVB + a 2-acyl-sn-glycero-3-phosphocholine. The enzyme catalyses a lipid IIA + a 1,2-diacyl-sn-glycero-3-phosphocholine = a lipid IIB + a 2-acyl-sn-glycero-3-phosphocholine. Transfers a fatty acid residue from the sn-1 position of a phospholipid to the N-linked hydroxyfatty acid chain on the proximal unit of lipid A or its precursors. This chain is Lipid A acyltransferase PagP, found in Sodalis glossinidius (strain morsitans).